A 251-amino-acid chain; its full sequence is Transcription factor bHLH144 (251 aa).

3 disordered regions span residues 1 to 20 (MQNN…NMHN), 130 to 161 (YEEN…YGNT), and 173 to 202 (NNNN…RKKM). Over residues 9–18 (FSDEVGDRNM) the composition is skewed to basic and acidic residues. Acidic residues predominate over residues 130 to 147 (YEENDDNEGEEDGGDSEE). The span at 148 to 161 (VSTARTSSRDYGNT) shows a compositional bias: polar residues. Positions 173-192 (NNNNNNNSRKQSLSGSASSS) are enriched in low complexity. The bHLH domain occupies 186–235 (SGSASSSNNDGKGRKKMKKMMGVLRRIVPGGEQMNTACVLDEAVQYLKSL).

As to quaternary structure, homodimer. Interacts with LHW.

Its subcellular location is the nucleus. The sequence is that of Transcription factor bHLH144 (BHLH144) from Arabidopsis thaliana (Mouse-ear cress).